The primary structure comprises 1135 residues: DNA-directed RNA polymerase I subunit RPA2 (1135 aa).

The disordered stretch occupies residues 1–24 (MDPGSRWRNLPSGPSLKHLTDPSY). Position 180 (Arg180) interacts with RNA. The segment at 194 to 208 (IRPKWKTRGPGYTQY) is loop B. The segment at 236-247 (LNFIYRKELFFL) is loop A. RNA is bound at residue Asp367. Fork loop regions lie at residues 439–453 (LRSK…DSGL) and 474–489 (RGAD…VRRL). Position 755 (Asp755) interacts with Mg(2+). Lys890 lines the RNA pocket. Residues Arg1020 and Arg1036 each contribute to the DNA site. Ser1051 is modified (phosphoserine). 4 residues coordinate Zn(2+): Cys1070, Cys1073, Cys1098, and Cys1101. The C4-type zinc finger occupies 1070–1101 (CVKCGSLLSPLLEKPPPSWSAMRNRKYNCTLC).

The protein belongs to the RNA polymerase beta chain family. Component of the RNA polymerase I (Pol I) complex consisting of 13 subunits: a ten-subunit catalytic core composed of POLR1A/RPA1, POLR1B/RPA2, POLR1C/RPAC1, POLR1D/RPAC2, POLR1H/RPA12, POLR2E/RPABC1, POLR2F/RPABC2, POLR2H/RPABC3, POLR2K/RPABC4 and POLR2L/RPABC5; a mobile stalk subunit POLR1F/RPA43 protruding from the core and additional subunits homologous to general transcription factors POLR1E/RPA49 and POLR1G/RPA34. Part of Pol I pre-initiation complex (PIC), in which Pol I core assembles with RRN3 and promoter-bound UTBF and SL1/TIF-IB complex. Mg(2+) serves as cofactor.

The protein localises to the nucleus. The protein resides in the nucleolus. It is found in the chromosome. It carries out the reaction RNA(n) + a ribonucleoside 5'-triphosphate = RNA(n+1) + diphosphate. In terms of biological role, catalytic core component of RNA polymerase I (Pol I), a DNA-dependent RNA polymerase which synthesizes ribosomal RNA precursors using the four ribonucleoside triphosphates as substrates. Transcribes 47S pre-rRNAs from multicopy rRNA gene clusters, giving rise to 5.8S, 18S and 28S ribosomal RNAs. Pol I-mediated transcription cycle proceeds through transcription initiation, transcription elongation and transcription termination stages. During transcription initiation, Pol I pre-initiation complex (PIC) is recruited by the selectivity factor 1 (SL1/TIF-IB) complex bound to the core promoter that precedes an rDNA repeat unit. The PIC assembly bends the promoter favoring the formation of the transcription bubble and promoter escape. Once the polymerase has escaped from the promoter it enters the elongation phase during which RNA is actively polymerized, based on complementarity with the template DNA strand. Highly processive, assembles in structures referred to as 'Miller trees' where many elongating Pol I complexes queue and transcribe the same rDNA coding regions. At terminator sequences downstream of the rDNA gene, PTRF interacts with Pol I and halts Pol I transcription leading to the release of the RNA transcript and polymerase from the DNA. Forms Pol I active center together with the largest subunit POLR1A/RPA1. Appends one nucleotide at a time to the 3' end of the nascent RNA, with POLR1A/RPA1 contributing a Mg(2+)-coordinating DxDGD motif, and POLR1B/RPA2 participating in the coordination of a second Mg(2+) ion and providing lysine residues believed to facilitate Watson-Crick base pairing between the incoming nucleotide and the template base. Typically, Mg(2+) ions direct a 5' nucleoside triphosphate to form a phosphodiester bond with the 3' hydroxyl of the preceding nucleotide of the nascent RNA, with the elimination of pyrophosphate. Has proofreading activity: Pauses and backtracks to allow the cleavage of a missincorporated nucleotide via POLR1H/RPA12. High Pol I processivity is associated with decreased transcription fidelity. This is DNA-directed RNA polymerase I subunit RPA2 from Homo sapiens (Human).